Reading from the N-terminus, the 228-residue chain is Histone H1-III (228 aa).

Low complexity predominate over residues 1–18 (MSDPAPEVASAVPVASPA). Disordered stretches follow at residues 1–44 (MSDP…PPVS) and 98–228 (LQTK…AKKA). An H15 domain is found at 39–113 (THPPVSEMVV…GASGSFKLPA (75 aa)). Residues 115–133 (AKKEKVAKTPKKAAGEKKP) are compositionally biased toward basic and acidic residues. 2 stretches are compositionally biased toward basic residues: residues 148–170 (SIAK…KSTK) and 178–209 (AAKK…KVAA). The segment covering 211-221 (KPAEKKPEAAK) has biased composition (basic and acidic residues).

It belongs to the histone H1/H5 family.

Its subcellular location is the nucleus. It localises to the chromosome. Histones H1 are necessary for the condensation of nucleosome chains into higher-order structures. This Glyptotendipes barbipes (Midge) protein is Histone H1-III.